Reading from the N-terminus, the 383-residue chain is 1-deoxy-D-xylulose 5-phosphate reductoisomerase (383 aa).

NADPH contacts are provided by T10, G11, S12, I13, G36, R37, N38, and N122. K123 contacts 1-deoxy-D-xylulose 5-phosphate. E124 is a binding site for NADPH. D148 contacts Mn(2+). Positions 149, 150, 174, and 197 each coordinate 1-deoxy-D-xylulose 5-phosphate. E150 contributes to the Mn(2+) binding site. G203 contacts NADPH. 1-deoxy-D-xylulose 5-phosphate-binding residues include S210, N215, K216, and E219. Position 219 (E219) interacts with Mn(2+).

Belongs to the DXR family. Mg(2+) serves as cofactor. The cofactor is Mn(2+).

The enzyme catalyses 2-C-methyl-D-erythritol 4-phosphate + NADP(+) = 1-deoxy-D-xylulose 5-phosphate + NADPH + H(+). It functions in the pathway isoprenoid biosynthesis; isopentenyl diphosphate biosynthesis via DXP pathway; isopentenyl diphosphate from 1-deoxy-D-xylulose 5-phosphate: step 1/6. In terms of biological role, catalyzes the NADPH-dependent rearrangement and reduction of 1-deoxy-D-xylulose-5-phosphate (DXP) to 2-C-methyl-D-erythritol 4-phosphate (MEP). In Bacillus pumilus (strain SAFR-032), this protein is 1-deoxy-D-xylulose 5-phosphate reductoisomerase.